A 124-amino-acid chain; its full sequence is Ribonuclease pancreatic (124 aa).

Positions 7 and 10 each coordinate substrate. Histidine 12 serves as the catalytic Proton acceptor. 4 disulfides stabilise this stretch: cysteine 26–cysteine 84, cysteine 40–cysteine 95, cysteine 58–cysteine 110, and cysteine 65–cysteine 72. Residue asparagine 34 is glycosylated (N-linked (GlcNAc...) asparagine). Residues 41–45 (KPVNT), lysine 66, and arginine 85 contribute to the substrate site. The active-site Proton donor is histidine 119.

It belongs to the pancreatic ribonuclease family. Monomer. Interacts with and forms tight 1:1 complexes with RNH1. Dimerization of two such complexes may occur. Interaction with RNH1 inhibits this protein. As to expression, pancreas.

It is found in the secreted. It carries out the reaction an [RNA] containing cytidine + H2O = an [RNA]-3'-cytidine-3'-phosphate + a 5'-hydroxy-ribonucleotide-3'-[RNA].. The catalysed reaction is an [RNA] containing uridine + H2O = an [RNA]-3'-uridine-3'-phosphate + a 5'-hydroxy-ribonucleotide-3'-[RNA].. In terms of biological role, endonuclease that catalyzes the cleavage of RNA on the 3' side of pyrimidine nucleotides. Acts on single-stranded and double-stranded RNA. This Eudorcas thomsonii (Thomson's gazelle) protein is Ribonuclease pancreatic (RNASE1).